The sequence spans 427 residues: ATP-dependent RNA helicase DDX39A (427 aa).

Acidic residues predominate over residues 1-19; it reads MAEQDVENELLDYDEDEEP. The disordered stretch occupies residues 1-36; the sequence is MAEQDVENELLDYDEDEEPQAPQESTPAPPKKDVKG. At Ala2 the chain carries N-acetylalanine. Lys31 participates in a covalent cross-link: Glycyl lysine isopeptide (Lys-Gly) (interchain with G-Cter in SUMO2). Residue Lys35 is modified to N6-acetyllysine; alternate. Lys35 is covalently cross-linked (Glycyl lysine isopeptide (Lys-Gly) (interchain with G-Cter in SUMO2); alternate). A Phosphoserine modification is found at Ser37. The Q motif motif lies at 44–72; sequence SGFRDFLLKPELLRAIVDCGFEHPSEVQH. Positions 75-248 constitute a Helicase ATP-binding domain; the sequence is IPQAILGMDV…RKFMQDPMEV (174 aa). Position 88–95 (88–95) interacts with ATP; it reads AKSGMGKT. Glycyl lysine isopeptide (Lys-Gly) (interchain with G-Cter in SUMO2) cross-links involve residues Lys154 and Lys162. Thr171 bears the Phosphothreonine mark. The DECD box motif lies at 195 to 198; it reads DECD. Glycyl lysine isopeptide (Lys-Gly) (interchain with G-Cter in SUMO2) cross-links involve residues Lys240 and Lys255. One can recognise a Helicase C-terminal domain in the interval 260–421; sequence GLQQYYVKLK…ELPEEIDIST (162 aa). Ser426 carries the phosphoserine modification.

The protein belongs to the DEAD box helicase family. DECD subfamily. As to quaternary structure, binds ALYREF/THOC4 and DDX39B/BAT1. Interacts with the apo-AREX complex component SARNP. Interacts with MX1. Interacts with MCM3AP isoform GANP. Interacts with ECD. Interacts with PHAX; this interaction stimulates PHAX RNA binding activity. In terms of processing, SUMOylated by RANBP2; SUMOylation modification affects its ability to bind RNA.

The protein localises to the nucleus. The protein resides in the cytoplasm. The enzyme catalyses ATP + H2O = ADP + phosphate + H(+). Functionally, helicase that plays an essential role in mRNA export and is involved in multiple steps in RNA metabolism including alternative splicing. Regulates nuclear mRNA export to the cytoplasm through association with ECD. Also involved in spliceosomal uridine-rich small nuclear RNA (U snRNA) export by stimulating the RNA binding of adapter PHAX. Plays a role in the negative regulation of type I IFN production by increasing the nuclear retention of antiviral transcripts and thus reducing their protein expression. Independently of the interferon pathway, plays an antiviral role against alphaviruses by binding to a 5' conserved sequence element in the viral genomic RNA. This Mus musculus (Mouse) protein is ATP-dependent RNA helicase DDX39A.